The primary structure comprises 376 residues: Succinyl-diaminopimelate desuccinylase (376 aa).

Histidine 67 is a binding site for Zn(2+). Aspartate 69 is a catalytic residue. Aspartate 100 is a binding site for Zn(2+). The active-site Proton acceptor is the glutamate 134. The Zn(2+) site is built by glutamate 135, glutamate 163, and histidine 349.

Belongs to the peptidase M20A family. DapE subfamily. As to quaternary structure, homodimer. Requires Zn(2+) as cofactor. It depends on Co(2+) as a cofactor.

The catalysed reaction is N-succinyl-(2S,6S)-2,6-diaminopimelate + H2O = (2S,6S)-2,6-diaminopimelate + succinate. Its pathway is amino-acid biosynthesis; L-lysine biosynthesis via DAP pathway; LL-2,6-diaminopimelate from (S)-tetrahydrodipicolinate (succinylase route): step 3/3. Functionally, catalyzes the hydrolysis of N-succinyl-L,L-diaminopimelic acid (SDAP), forming succinate and LL-2,6-diaminopimelate (DAP), an intermediate involved in the bacterial biosynthesis of lysine and meso-diaminopimelic acid, an essential component of bacterial cell walls. The protein is Succinyl-diaminopimelate desuccinylase of Shewanella denitrificans (strain OS217 / ATCC BAA-1090 / DSM 15013).